We begin with the raw amino-acid sequence, 435 residues long: Eukaryotic translation initiation factor 3 subunit E (435 aa).

In terms of domain architecture, PCI spans 219–392 (FFNHAKGRDL…GHVVMGTQPL (174 aa)).

Belongs to the eIF-3 subunit E family. In terms of assembly, component of the eukaryotic translation initiation factor 3 (eIF-3) complex.

Its subcellular location is the cytoplasm. In terms of biological role, component of the eukaryotic translation initiation factor 3 (eIF-3) complex, which is involved in protein synthesis of a specialized repertoire of mRNAs and, together with other initiation factors, stimulates binding of mRNA and methionyl-tRNAi to the 40S ribosome. The eIF-3 complex specifically targets and initiates translation of a subset of mRNAs involved in cell proliferation. In Culex quinquefasciatus (Southern house mosquito), this protein is Eukaryotic translation initiation factor 3 subunit E (eIF3-S6).